Reading from the N-terminus, the 84-residue chain is NAD(P)H-quinone oxidoreductase subunit O (84 aa).

This sequence belongs to the complex I NdhO subunit family. In terms of assembly, NDH-1 can be composed of about 15 different subunits; different subcomplexes with different compositions have been identified which probably have different functions.

It localises to the cellular thylakoid membrane. It carries out the reaction a plastoquinone + NADH + (n+1) H(+)(in) = a plastoquinol + NAD(+) + n H(+)(out). The catalysed reaction is a plastoquinone + NADPH + (n+1) H(+)(in) = a plastoquinol + NADP(+) + n H(+)(out). Its function is as follows. NDH-1 shuttles electrons from an unknown electron donor, via FMN and iron-sulfur (Fe-S) centers, to quinones in the respiratory and/or the photosynthetic chain. The immediate electron acceptor for the enzyme in this species is believed to be plastoquinone. Couples the redox reaction to proton translocation, and thus conserves the redox energy in a proton gradient. Cyanobacterial NDH-1 also plays a role in inorganic carbon-concentration. The chain is NAD(P)H-quinone oxidoreductase subunit O from Parasynechococcus marenigrum (strain WH8102).